Here is a 79-residue protein sequence, read N- to C-terminus: Small ribosomal subunit protein bS18 (79 aa).

This sequence belongs to the bacterial ribosomal protein bS18 family. Part of the 30S ribosomal subunit. Forms a tight heterodimer with protein bS6.

Binds as a heterodimer with protein bS6 to the central domain of the 16S rRNA, where it helps stabilize the platform of the 30S subunit. In Ureaplasma urealyticum serovar 10 (strain ATCC 33699 / Western), this protein is Small ribosomal subunit protein bS18.